Consider the following 180-residue polypeptide: MKSLSKLVRTVDESQIIEFFQESVGEWCSQRRYYTLPDGETKEMMSMITIRFLEQGCDELQKLAQIHKLAESVFLICGAEVTWCSTDVLKNRSESEGSTLFGALGNILYRDRGFATSKPVTAQYNFPNPKTLCLRTEYNGSVFEEELKLIGSKYRTRQTIISRAGEQLMIGQYIEKRIVQ.

The protein belongs to the CpcS/CpeS biliprotein lyase family.

Its function is as follows. Covalently attaches a chromophore to Cys residue(s) of phycobiliproteins (Potential). In vitro does not act as a chromophore lyase for ApcA1, ApcA2, ApcB, ApcD, ApcF, CpcB or PecB, the lyase activity is therefore unsure. The polypeptide is Putative phycocyanobilin lyase CpcS 2 (cpeS2) (Nostoc sp. (strain PCC 7120 / SAG 25.82 / UTEX 2576)).